Consider the following 2174-residue polypeptide: Mediator of RNA polymerase II transcription subunit 13 (2174 aa).

Ser395 carries the post-translational modification Phosphoserine. Positions 435-477 (RNAGQQGQAPSLGQQQQILPKHKTNEKQEKSEKPQKRPLTPFH) are disordered. A compositionally biased stretch (low complexity) spans 438 to 451 (GQQGQAPSLGQQQQ). Residues 457-469 (KTNEKQEKSEKPQ) are compositionally biased toward basic and acidic residues. A phosphoserine mark is found at Ser500, Ser504, Ser530, and Ser537. Positions 709–730 (FPDKKDRQNSEREAGKKHKVED) are enriched in basic and acidic residues. Disordered regions lie at residues 709 to 735 (FPDKKDRQNSEREAGKKHKVEDGTSSV), 749 to 769 (SPSIKQDAPRPTSHARPPSTS), and 787 to 816 (FNSDEDELTPGSKKSANGSDDKASCKESKT). Residues 805-815 (SDDKASCKESK) are compositionally biased toward basic and acidic residues. Residues Ser826 and Ser890 each carry the phosphoserine modification. Residues 959–1054 (FIKEGDGSNM…ASTPSTCRPL (96 aa)) are disordered. Residues 992 to 1003 (PPSNSGAGILPS) show a composition bias toward low complexity. Over residues 1004 to 1015 (PSTPRFPTPRTP) the composition is skewed to pro residues. Ser1029 carries the post-translational modification Phosphoserine. Residues 1040 to 1053 (DLYSPASTPSTCRP) show a composition bias toward polar residues. 2 consecutive short sequence motifs (LXXLL motif) follow at residues 1188 to 1192 (LILLL) and 1279 to 1283 (LRMLL). 2 stretches are compositionally biased toward polar residues: residues 1484–1498 (SQSLITPPQMTNTGN) and 1563–1606 (SMNS…SLPT). Disordered stretches follow at residues 1484 to 1505 (SQSLITPPQMTNTGNANTPSAT), 1557 to 1617 (SFPP…ESTM), and 2015 to 2048 (LPASPTGSPVHSPGSHYPHGGDAGKGQSTDRLLS).

This sequence belongs to the Mediator complex subunit 13 family. As to quaternary structure, component of the Mediator complex, which is composed of MED1, MED4, MED6, MED7, MED8, MED9, MED10, MED11, MED12, MED13, MED13L, MED14, MED15, MED16, MED17, MED18, MED19, MED20, MED21, MED22, MED23, MED24, MED25, MED26, MED27, MED29, MED30, MED31, CCNC, CDK8 and CDC2L6/CDK11. The MED12, MED13, CCNC and CDK8 subunits form a distinct module termed the CDK8 module. Mediator containing the CDK8 module is less active than Mediator lacking this module in supporting transcriptional activation. Individual preparations of the Mediator complex lacking one or more distinct subunits have been variously termed ARC, CRSP, DRIP, PC2, SMCC and TRAP. Ubiquitous.

It localises to the nucleus. In terms of biological role, component of the Mediator complex, a coactivator involved in the regulated transcription of nearly all RNA polymerase II-dependent genes. Mediator functions as a bridge to convey information from gene-specific regulatory proteins to the basal RNA polymerase II transcription machinery. Mediator is recruited to promoters by direct interactions with regulatory proteins and serves as a scaffold for the assembly of a functional preinitiation complex with RNA polymerase II and the general transcription factors. The sequence is that of Mediator of RNA polymerase II transcription subunit 13 from Homo sapiens (Human).